A 195-amino-acid polypeptide reads, in one-letter code: ATP-dependent Clp protease proteolytic subunit (195 aa).

Ser94 acts as the Nucleophile in catalysis. Residue His119 is part of the active site.

It belongs to the peptidase S14 family. In terms of assembly, component of the chloroplastic Clp protease core complex.

Its subcellular location is the plastid. It is found in the chloroplast stroma. It carries out the reaction Hydrolysis of proteins to small peptides in the presence of ATP and magnesium. alpha-casein is the usual test substrate. In the absence of ATP, only oligopeptides shorter than five residues are hydrolyzed (such as succinyl-Leu-Tyr-|-NHMec, and Leu-Tyr-Leu-|-Tyr-Trp, in which cleavage of the -Tyr-|-Leu- and -Tyr-|-Trp bonds also occurs).. Functionally, cleaves peptides in various proteins in a process that requires ATP hydrolysis. Has a chymotrypsin-like activity. Plays a major role in the degradation of misfolded proteins. The protein is ATP-dependent Clp protease proteolytic subunit of Cycas taitungensis (Prince sago).